Reading from the N-terminus, the 170-residue chain is Cathelicidin antimicrobial peptide (170 aa).

An N-terminal signal peptide occupies residues 1 to 30; sequence MKTQRDGHSLGRWSLVLLLLGLVMPLAIIA. The propeptide at 31 to 131 is cathelin-like domain (CLD); the sequence is QVLSYKEAVL…DISCDKDNKR (101 aa). Disulfide bonds link C86/C97 and C108/C125. The interval 150–162 is active core; that stretch reads FKRIVQRIKDFLR.

The protein belongs to the cathelicidin family. In terms of assembly, monomer, homodimer or homotrimer (in vitro). Oligomerizes as tetra- or hexamer in solution (in vitro). Post-translationally, the N-terminus is blocked. Proteolytically cleaved by proteinase PRTN3 into antibacterial peptide LL-37. Proteolytically cleaved by cathepsin CTSG and neutrophil elastase ELANE. In terms of processing, resistant to proteolytic degradation in solution, and when bound to both zwitterionic (mimicking mammalian membranes) and negatively charged membranes (mimicking bacterial membranes). Post-translationally, after secretion onto the skin surface, the CAMP gene product is processed by a serine protease-dependent mechanism into multiple novel antimicrobial peptides distinct from and shorter than cathelicidin LL-37, such as peptides KR-20 (residues 151-170), LL-23 (residues 134-156), LL-29 (residues 134-162), KS-30 (residues 141-170), RK-31 (residues 140-170) and FF-33 (residues 138-170). The peptides act synergistically, killing bacteria at lower concentrations when present together, and maintain activity at increased salt condition. Expressed in neutrophilic granulocytes (at protein level). Expressed in bone marrow. In terms of tissue distribution, expressed in granulocytes (at protein level). Expressed by the eccrine apparatus and secreted into sweat on skin (at protein level). As to expression, expressed in bone marrow and testis.

It localises to the secreted. The protein resides in the vesicle. Functionally, antimicrobial protein that is an integral component of the innate immune system. Binds to bacterial lipopolysaccharides (LPS). Acts via neutrophil N-formyl peptide receptors to enhance the release of CXCL2. Postsecretory processing generates multiple cathelicidin antimicrobial peptides with various lengths which act as a topical antimicrobial defense in sweat on skin. The unprocessed precursor form, cathelicidin antimicrobial peptide, inhibits the growth of Gram-negative E.coli and E.aerogenes with efficiencies comparable to that of the mature peptide LL-37 (in vitro). In terms of biological role, antimicrobial peptide that is an integral component of the innate immune system. Binds to bacterial lipopolysaccharides (LPS). Causes membrane permeabilization by forming transmembrane pores (in vitro). Causes lysis of E.coli. Exhibits antimicrobial activity against Gram-negative bacteria such as P.aeruginosa, S.typhimurium, E.aerogenes, E.coli and P.syringae, Gram-positive bacteria such as L.monocytogenes, S.epidermidis, S.pyogenes and S.aureus, as well as vancomycin-resistant enterococci (in vitro). Exhibits antimicrobial activity against methicillin-resistant S.aureus, P.mirabilis, and C.albicans in low-salt media, but not in media containing 100 mM NaCl (in vitro). Forms chiral supramolecular assemblies with quinolone signal (PQS) molecules of P.aeruginosa, which may lead to interference of bacterial quorum signaling and perturbance of bacterial biofilm formation. May form supramolecular fiber-like assemblies on bacterial membranes. Induces cytokine and chemokine production as well as TNF/TNFA and CSF2/GMCSF production in normal human keratinocytes. Exhibits hemolytic activity against red blood cells. Exhibits antimicrobial activity against E.coli and B.megaterium (in vitro). Its function is as follows. Acts synergistically with peptides KS-30 and KR-31, killing bacteria such as S.aureus, E.coli and C.albicans at lower concentrations when present together, and maintains activity at increased salt condition. Does not have the ability to stimulate CXCL8/IL8 release from keratinocytes. Functionally, poorly active (MIC &gt; 150 uM) against E.coli strain K12. Is able to induce the pro-inflammatory cytokine TNF/TNFA or the chemokine CCL2/MCP1. In terms of biological role, moderately antibacterial. Moderately antibacterial. Acts synergistically with peptides KR-20 and KR-31, killing bacteria such as S.aureus, E.coli and C.albicans at lower concentrations when present together, and maintain activity at increased salt condition. Does not have the ability to stimulate CXCL8/IL8 release from keratinocytes. Its function is as follows. Acts synergistically with peptides KS-30 and KR-31, killing bacteria such as S.aureus, E.coli and C.albicans at lower concentrations when present together, and maintain activity at increased salt condition. Does not have the ability to stimulate CXCL8/IL8 release from keratinocytes. Functionally, inhibits the growth of E.coli and B.megaterium and exhibits hemolytic activity against human red blood cells. The polypeptide is Cathelicidin antimicrobial peptide (Homo sapiens (Human)).